The sequence spans 343 residues: Anthranilate phosphoribosyltransferase (343 aa).

5-phospho-alpha-D-ribose 1-diphosphate is bound by residues Gly-85, 88–89, Thr-93, 95–98, 113–121, and Ala-125; these read GD, NIST, and KHGGRSVSS. Gly-85 is an anthranilate binding site. Ser-97 provides a ligand contact to Mg(2+). Arg-171 serves as a coordination point for anthranilate. 2 residues coordinate Mg(2+): Asp-230 and Glu-231.

The protein belongs to the anthranilate phosphoribosyltransferase family. As to quaternary structure, homodimer. Mg(2+) is required as a cofactor.

It catalyses the reaction N-(5-phospho-beta-D-ribosyl)anthranilate + diphosphate = 5-phospho-alpha-D-ribose 1-diphosphate + anthranilate. It participates in amino-acid biosynthesis; L-tryptophan biosynthesis; L-tryptophan from chorismate: step 2/5. Catalyzes the transfer of the phosphoribosyl group of 5-phosphorylribose-1-pyrophosphate (PRPP) to anthranilate to yield N-(5'-phosphoribosyl)-anthranilate (PRA). This chain is Anthranilate phosphoribosyltransferase, found in Aromatoleum aromaticum (strain DSM 19018 / LMG 30748 / EbN1) (Azoarcus sp. (strain EbN1)).